The sequence spans 816 residues: Sucrose synthase 2 (816 aa).

Position 15 is a phosphoserine (S15). Residues 280 to 757 (MVFNVVILSP…GLQRIEEKYT (478 aa)) form a GT-B glycosyltransferase region.

This sequence belongs to the glycosyltransferase 1 family. Plant sucrose synthase subfamily.

It catalyses the reaction an NDP-alpha-D-glucose + D-fructose = a ribonucleoside 5'-diphosphate + sucrose + H(+). Its function is as follows. Sucrose-cleaving enzyme that provides UDP-glucose and fructose for various metabolic pathways. The polypeptide is Sucrose synthase 2 (SUS1) (Zea mays (Maize)).